The sequence spans 97 residues: DNA/RNA-binding protein Alba (97 aa).

N6-acetyllysine is present on K15.

It belongs to the histone-like Alba family. Acetylated. Acetylation at Lys-15 decreases DNA-binding affinity.

Its subcellular location is the cytoplasm. It localises to the chromosome. Its function is as follows. Binds double-stranded DNA tightly but without sequence specificity. Involved in DNA compaction. This Sulfolobus acidocaldarius (strain ATCC 33909 / DSM 639 / JCM 8929 / NBRC 15157 / NCIMB 11770) protein is DNA/RNA-binding protein Alba.